The chain runs to 253 residues: DnaJ homolog subfamily C member 8 (253 aa).

At Ala2 the chain carries N-acetylalanine. Ser35 is modified (phosphoserine). In terms of domain architecture, J spans 57 to 124; that stretch reads NPFEVLQIDP…QKKRALDVIQ (68 aa). Lys146 is modified (N6-acetyllysine). Over residues 181-222 the composition is skewed to basic and acidic residues; sequence EAKEMHERKRQREEEIEAQEKAKREREWQKNFEESRDGRVDS. The disordered stretch occupies residues 181 to 253; the sequence is EAKEMHERKR…PPKVKMEQRE (73 aa). 2 short sequence motifs (nuclear localization signal) span residues 189–192 and 203–206; these read KRQR and KRER. Ser222 carries the phosphoserine modification. The segment covering 231–240 has biased composition (basic residues); sequence KGKKEKKNRT. The segment at 232-253 is essential for polyglutamine aggregation suppression; sequence GKKEKKNRTFLRPPKVKMEQRE.

As to quaternary structure, interacts with SRPK1. Interacts with HSP70 (HSPA1A or HSPA1B).

It localises to the nucleus. Its function is as follows. Suppresses polyglutamine (polyQ) aggregation of ATXN3 in neuronal cells. This is DnaJ homolog subfamily C member 8 (Dnajc8) from Mus musculus (Mouse).